We begin with the raw amino-acid sequence, 254 residues long: Geranylgeranylglyceryl phosphate synthase (254 aa).

Positions 28 and 57 each coordinate Mg(2+). Residues Tyr-176–Gly-182, Gly-207–Gly-208, and Gly-229–Thr-230 contribute to the sn-glycerol 1-phosphate site.

It belongs to the GGGP/HepGP synthase family. Group II subfamily. Requires Mg(2+) as cofactor.

The protein localises to the cytoplasm. It catalyses the reaction sn-glycerol 1-phosphate + (2E,6E,10E)-geranylgeranyl diphosphate = sn-3-O-(geranylgeranyl)glycerol 1-phosphate + diphosphate. Its pathway is membrane lipid metabolism; glycerophospholipid metabolism. Functionally, prenyltransferase that catalyzes the transfer of the geranylgeranyl moiety of geranylgeranyl diphosphate (GGPP) to the C3 hydroxyl of sn-glycerol-1-phosphate (G1P). This reaction is the first ether-bond-formation step in the biosynthesis of archaeal membrane lipids. This is Geranylgeranylglyceryl phosphate synthase from Pyrococcus horikoshii (strain ATCC 700860 / DSM 12428 / JCM 9974 / NBRC 100139 / OT-3).